The following is a 116-amino-acid chain: UPF0102 protein Sala_0262 (116 aa).

Belongs to the UPF0102 family.

This Sphingopyxis alaskensis (strain DSM 13593 / LMG 18877 / RB2256) (Sphingomonas alaskensis) protein is UPF0102 protein Sala_0262.